Reading from the N-terminus, the 85-residue chain is U4-theraphotoxin-Hhn1w (85 aa).

The first 22 residues, 1-22, serve as a signal peptide directing secretion; that stretch reads MKVTLIAILTCAAVLALHTTAA. The propeptide occupies 23–48; it reads EELEAESQLMEVGMPDTELAAVDEER. Disulfide bonds link Cys52–Cys66, Cys56–Cys77, and Cys71–Cys82.

It belongs to the neurotoxin 12 (Hwtx-2) family. 02 (Hwtx-2) subfamily. In terms of tissue distribution, expressed by the venom gland.

Its subcellular location is the secreted. In terms of biological role, postsynaptic neurotoxin. In Cyriopagopus hainanus (Chinese bird spider), this protein is U4-theraphotoxin-Hhn1w.